We begin with the raw amino-acid sequence, 144 residues long: Maximins 9/H3 (144 aa).

The first 18 residues, 1–18 (MNFKYIVAVSFLIASAYA), serve as a signal peptide directing secretion. Residues 19–43 (RSVKNDEQSLSQRDVLEEESLREIR) constitute a propeptide that is removed on maturation. Tyr70 carries the post-translational modification Tyrosine amide. Residues 74-123 (TAEEHEVMKRLEAIMRDLDSLDHPEEASERETRGFNQDEIANLFTKKEKR) constitute a propeptide that is removed on maturation. Ile143 carries the post-translational modification Isoleucine amide.

Belongs to the bombinin family. As to expression, expressed by the skin glands.

It is found in the secreted. Its function is as follows. Maximin-9 shows antimicrobial activity against bacteria and against the fungus C.albicans. It has little hemolytic activity. In terms of biological role, maximin-H3 shows antibacterial activity against both Gram-positive and Gram-negative bacteria. It also shows antimicrobial activity against the fungus C.albicans. Shows strong hemolytic activity. This chain is Maximins 9/H3, found in Bombina maxima (Giant fire-bellied toad).